The primary structure comprises 192 residues: Small ribosomal subunit protein uS5 (192 aa).

The disordered stretch occupies residues 1 to 21 (MAAERERGGRERGGRDRDERD). The region spanning 24–87 (FVDKLVHINR…DSAKRNLTRV (64 aa)) is the S5 DRBM domain.

Belongs to the universal ribosomal protein uS5 family. As to quaternary structure, part of the 30S ribosomal subunit. Contacts proteins S4 and S8.

In terms of biological role, with S4 and S12 plays an important role in translational accuracy. Located at the back of the 30S subunit body where it stabilizes the conformation of the head with respect to the body. The sequence is that of Small ribosomal subunit protein uS5 from Afipia carboxidovorans (strain ATCC 49405 / DSM 1227 / KCTC 32145 / OM5) (Oligotropha carboxidovorans).